The sequence spans 160 residues: Small ribosomal subunit protein uS17z (160 aa).

This sequence belongs to the universal ribosomal protein uS17 family.

It localises to the cytoplasm. This is Small ribosomal subunit protein uS17z (RPS11A) from Arabidopsis thaliana (Mouse-ear cress).